A 145-amino-acid chain; its full sequence is Transcription factor MEE8 (145 aa).

A compositionally biased stretch (basic and acidic residues) spans 33-49 (EKGVEKVGQKRSAESRR). The segment at 33 to 61 (EKGVEKVGQKRSAESRREGKKKRVKTQCV) is disordered. The 50-residue stretch at 66–115 (DKSDHDTLLKKKRRERIRRQLETLKEITPNCPQSDINAILDCVIEYTNNL) folds into the bHLH domain.

As to quaternary structure, homodimer.

Its subcellular location is the nucleus. Its function is as follows. Required during early embryo development, for the endosperm formation. This is Transcription factor MEE8 (MEE8) from Arabidopsis thaliana (Mouse-ear cress).